Here is a 96-residue protein sequence, read N- to C-terminus: UPF0235 protein ESA_00387 (96 aa).

It belongs to the UPF0235 family.

The protein is UPF0235 protein ESA_00387 of Cronobacter sakazakii (strain ATCC BAA-894) (Enterobacter sakazakii).